Here is a 356-residue protein sequence, read N- to C-terminus: 1-deoxy-D-xylulose 5-phosphate reductoisomerase (356 aa).

NADPH contacts are provided by Thr-7, Gly-8, Ser-9, Ile-10, Gly-31, Asn-33, and Asn-111. Lys-112 contacts 1-deoxy-D-xylulose 5-phosphate. Glu-113 serves as a coordination point for NADPH. Asp-131 contributes to the Mn(2+) binding site. Residues Ser-132, Glu-133, Ser-155, and His-178 each contribute to the 1-deoxy-D-xylulose 5-phosphate site. Residue Glu-133 participates in Mn(2+) binding. Gly-184 provides a ligand contact to NADPH. 4 residues coordinate 1-deoxy-D-xylulose 5-phosphate: Ser-191, Asn-196, Lys-197, and Glu-200. A Mn(2+)-binding site is contributed by Glu-200.

Belongs to the DXR family. Requires Mg(2+) as cofactor. Mn(2+) serves as cofactor.

The catalysed reaction is 2-C-methyl-D-erythritol 4-phosphate + NADP(+) = 1-deoxy-D-xylulose 5-phosphate + NADPH + H(+). The protein operates within isoprenoid biosynthesis; isopentenyl diphosphate biosynthesis via DXP pathway; isopentenyl diphosphate from 1-deoxy-D-xylulose 5-phosphate: step 1/6. Catalyzes the NADPH-dependent rearrangement and reduction of 1-deoxy-D-xylulose-5-phosphate (DXP) to 2-C-methyl-D-erythritol 4-phosphate (MEP). This chain is 1-deoxy-D-xylulose 5-phosphate reductoisomerase, found in Campylobacter jejuni subsp. doylei (strain ATCC BAA-1458 / RM4099 / 269.97).